Reading from the N-terminus, the 443-residue chain is Probable glycine dehydrogenase (decarboxylating) subunit 1 (443 aa).

Belongs to the GcvP family. N-terminal subunit subfamily. The glycine cleavage system is composed of four proteins: P, T, L and H. In this organism, the P 'protein' is a heterodimer of two subunits.

The catalysed reaction is N(6)-[(R)-lipoyl]-L-lysyl-[glycine-cleavage complex H protein] + glycine + H(+) = N(6)-[(R)-S(8)-aminomethyldihydrolipoyl]-L-lysyl-[glycine-cleavage complex H protein] + CO2. The glycine cleavage system catalyzes the degradation of glycine. The P protein binds the alpha-amino group of glycine through its pyridoxal phosphate cofactor; CO(2) is released and the remaining methylamine moiety is then transferred to the lipoamide cofactor of the H protein. This chain is Probable glycine dehydrogenase (decarboxylating) subunit 1, found in Endomicrobium trichonymphae.